Consider the following 179-residue polypeptide: Large ribosomal subunit protein uL5 (179 aa).

The protein belongs to the universal ribosomal protein uL5 family. As to quaternary structure, part of the 50S ribosomal subunit; part of the 5S rRNA/L5/L18/L25 subcomplex. Contacts the 5S rRNA and the P site tRNA. Forms a bridge to the 30S subunit in the 70S ribosome.

Its function is as follows. This is one of the proteins that bind and probably mediate the attachment of the 5S RNA into the large ribosomal subunit, where it forms part of the central protuberance. In the 70S ribosome it contacts protein S13 of the 30S subunit (bridge B1b), connecting the 2 subunits; this bridge is implicated in subunit movement. Contacts the P site tRNA; the 5S rRNA and some of its associated proteins might help stabilize positioning of ribosome-bound tRNAs. In Bacillus cereus (strain G9842), this protein is Large ribosomal subunit protein uL5.